Here is a 129-residue protein sequence, read N- to C-terminus: UPF0102 protein Mnod_0024 (129 aa).

Belongs to the UPF0102 family.

This Methylobacterium nodulans (strain LMG 21967 / CNCM I-2342 / ORS 2060) protein is UPF0102 protein Mnod_0024.